A 207-amino-acid polypeptide reads, in one-letter code: Acyl-homoserine-lactone synthase (207 aa).

Belongs to the autoinducer synthase family.

The catalysed reaction is a fatty acyl-[ACP] + S-adenosyl-L-methionine = an N-acyl-L-homoserine lactone + S-methyl-5'-thioadenosine + holo-[ACP] + H(+). Functionally, required for the synthesis of N-butanoyl-L-homoserine lactone (BHL), an autoinducer molecule which binds to AsaR. This is Acyl-homoserine-lactone synthase (asaI) from Aeromonas salmonicida.